We begin with the raw amino-acid sequence, 321 residues long: Malate dehydrogenase (321 aa).

NAD(+) is bound by residues 10-15 and aspartate 34; that span reads GSGMIG. Substrate is bound by residues arginine 83 and arginine 89. NAD(+) contacts are provided by residues asparagine 96 and 119–121; that span reads ITN. Asparagine 121 and arginine 152 together coordinate substrate. Histidine 176 acts as the Proton acceptor in catalysis.

Belongs to the LDH/MDH superfamily. MDH type 3 family.

The enzyme catalyses (S)-malate + NAD(+) = oxaloacetate + NADH + H(+). Catalyzes the reversible oxidation of malate to oxaloacetate. The protein is Malate dehydrogenase of Chelativorans sp. (strain BNC1).